The chain runs to 754 residues: Photosystem I P700 chlorophyll a apoprotein A1 (754 aa).

The next 8 membrane-spanning stretches (helical) occupy residues 72–95, 158–181, 197–221, 293–311, 351–374, 390–416, 438–460, and 535–553; these read IFSAHFGHLAVIFVWLSGMYFHGA, LYCTAIGGLVMAGLMLFAGWFHYH, MNHHLAGLLGLGSLGWAGHQIHVSL, TAHHHLAIAVLFIIAGHMY, WHAQLAINLALLGSLSIIVAHHMY, LSLFTHHVWIGGFLIVGAGAHGAIFMV, AIISHLNWVCIFLGFHSFGLYIH, and FMVHHIHAFTIHVTVLILL. [4Fe-4S] cluster contacts are provided by cysteine 577 and cysteine 586. Transmembrane regions (helical) follow at residues 593–614 and 668–690; these read HVFLGLFWMYNSLSIVIFHFSW and LSAYGIMFLAGHFVFAFSLMFLF. Position 679 (histidine 679) interacts with chlorophyll a'. Positions 687 and 695 each coordinate chlorophyll a. Tryptophan 696 is a binding site for phylloquinone. Residues 728–748 form a helical membrane-spanning segment; sequence AVGVAHYLLGGIVTTWAFFLA.

It belongs to the PsaA/PsaB family. As to quaternary structure, the PsaA/B heterodimer binds the P700 chlorophyll special pair and subsequent electron acceptors. PSI consists of a core antenna complex that captures photons, and an electron transfer chain that converts photonic excitation into a charge separation. The cyanobacterial PSI reaction center is composed of one copy each of PsaA,B,C,D,E,F,I,J,K,L,M and X, and forms trimeric complexes. PSI electron transfer chain: 5 chlorophyll a, 1 chlorophyll a', 2 phylloquinones and 3 4Fe-4S clusters. PSI core antenna: 90 chlorophyll a, 22 carotenoids, 3 phospholipids and 1 galactolipid. P700 is a chlorophyll a/chlorophyll a' dimer, A0 is one or more chlorophyll a, A1 is one or both phylloquinones and FX is a shared 4Fe-4S iron-sulfur center. serves as cofactor.

It localises to the cellular thylakoid membrane. The enzyme catalyses reduced [plastocyanin] + hnu + oxidized [2Fe-2S]-[ferredoxin] = oxidized [plastocyanin] + reduced [2Fe-2S]-[ferredoxin]. Its function is as follows. PsaA and PsaB bind P700, the primary electron donor of photosystem I (PSI), as well as the electron acceptors A0, A1 and FX. PSI is a plastocyanin/cytochrome c6-ferredoxin oxidoreductase, converting photonic excitation into a charge separation, which transfers an electron from the donor P700 chlorophyll pair to the spectroscopically characterized acceptors A0, A1, FX, FA and FB in turn. Oxidized P700 is reduced on the lumenal side of the thylakoid membrane by plastocyanin or cytochrome c6. The protein is Photosystem I P700 chlorophyll a apoprotein A1 of Rippkaea orientalis (strain PCC 8801 / RF-1) (Cyanothece sp. (strain PCC 8801)).